Reading from the N-terminus, the 95-residue chain is uncharacterized protein (95 aa).

This is an uncharacterized protein from Caenorhabditis elegans.